A 135-amino-acid polypeptide reads, in one-letter code: Actin-related protein 2/3 complex subunit 5B (135 aa).

The protein belongs to the ARPC5 family. As to quaternary structure, component of the Arp2/3 complex composed of ARP2, ARP3, ARPC1/p41-ARC, ARPC2/p34-ARC, ARPC3/p21-ARC, ARPC4/p20-ARC and ARPC5/p16-ARC.

The protein localises to the cytoplasm. Its subcellular location is the cytoskeleton. It is found in the cell projection. Functions as a component of the Arp2/3 complex which is involved in regulation of actin polymerization and together with an activating nucleation-promoting factor (NPF) mediates the formation of branched actin networks. Arp2/3 complex plays a critical role in the control of cell morphogenesis via the modulation of cell polarity development. The sequence is that of Actin-related protein 2/3 complex subunit 5B (ARPC5B) from Arabidopsis thaliana (Mouse-ear cress).